The primary structure comprises 409 residues: Arginine deiminase (409 aa).

The active-site Amidino-cysteine intermediate is the C398.

This sequence belongs to the arginine deiminase family.

The protein localises to the cytoplasm. The catalysed reaction is L-arginine + H2O = L-citrulline + NH4(+). Its pathway is amino-acid degradation; L-arginine degradation via ADI pathway; carbamoyl phosphate from L-arginine: step 1/2. The sequence is that of Arginine deiminase from Metamycoplasma arthritidis (strain 158L3-1) (Mycoplasma arthritidis).